A 250-amino-acid chain; its full sequence is Ribosomal RNA small subunit methyltransferase J (250 aa).

S-adenosyl-L-methionine-binding positions include 101 to 102, 117 to 118, 153 to 154, and Asp171; these read RD, ER, and SS.

This sequence belongs to the methyltransferase superfamily. RsmJ family.

Its subcellular location is the cytoplasm. It carries out the reaction guanosine(1516) in 16S rRNA + S-adenosyl-L-methionine = N(2)-methylguanosine(1516) in 16S rRNA + S-adenosyl-L-homocysteine + H(+). Functionally, specifically methylates the guanosine in position 1516 of 16S rRNA. The protein is Ribosomal RNA small subunit methyltransferase J of Shigella dysenteriae serotype 1 (strain Sd197).